A 278-amino-acid chain; its full sequence is Ankyrin repeat and SOCS box protein 13 (278 aa).

ANK repeat units lie at residues Val-18–Gln-47, Asp-51–Ala-80, Asp-84–Pro-113, Tyr-116–Ala-145, His-149–Ala-178, and Leu-181–Ala-210. In terms of domain architecture, SOCS box spans Ala-229 to Asn-278.

The protein belongs to the ankyrin SOCS box (ASB) family.

The protein operates within protein modification; protein ubiquitination. In terms of biological role, may be a substrate-recognition component of a SCF-like ECS (Elongin-Cullin-SOCS-box protein) E3 ubiquitin-protein ligase complex which mediates the ubiquitination and subsequent proteasomal degradation of target proteins. The chain is Ankyrin repeat and SOCS box protein 13 (Asb13) from Mus musculus (Mouse).